A 258-amino-acid chain; its full sequence is uncharacterized protein (258 aa).

The signal sequence occupies residues 1–19 (MRKIFLPLLLVALSPVAHS).

This is an uncharacterized protein from Escherichia coli (strain K12).